The primary structure comprises 151 residues: FAD synthase (151 aa).

ATP is bound by residues 12 to 13 (TF), 17 to 20 (HPGH), aspartate 97, and tyrosine 125.

The protein belongs to the archaeal FAD synthase family. As to quaternary structure, homodimer. A divalent metal cation is required as a cofactor.

The catalysed reaction is FMN + ATP + H(+) = FAD + diphosphate. It participates in cofactor biosynthesis; FAD biosynthesis; FAD from FMN: step 1/1. Functionally, catalyzes the transfer of the AMP portion of ATP to flavin mononucleotide (FMN) to produce flavin adenine dinucleotide (FAD) coenzyme. The sequence is that of FAD synthase from Methanocaldococcus sp. (strain FS406-22).